Here is a 223-residue protein sequence, read N- to C-terminus: Ribosomal RNA small subunit methyltransferase G (223 aa).

Residues Gly85, Phe90, and Arg154 each contribute to the S-adenosyl-L-methionine site.

Belongs to the methyltransferase superfamily. RNA methyltransferase RsmG family.

It localises to the cytoplasm. The catalysed reaction is guanosine(527) in 16S rRNA + S-adenosyl-L-methionine = N(7)-methylguanosine(527) in 16S rRNA + S-adenosyl-L-homocysteine. Its function is as follows. Specifically methylates the N7 position of guanine in position 527 of 16S rRNA. In Rhodopseudomonas palustris (strain ATCC BAA-98 / CGA009), this protein is Ribosomal RNA small subunit methyltransferase G.